The chain runs to 180 residues: Methionine-R-sulfoxide reductase B2, mitochondrial (180 aa).

The N-terminal 41 residues, 1-41 (MSRFLVRLSTVVSKGATGKSVLPQKRIFAGIRLISSSTGLQ), are a transit peptide targeting the mitochondrion. Residues 49–178 (STDWQRKLSP…NSVALNFKPR (130 aa)) form the MsrB domain. Zn(2+)-binding residues include Cys-88, Cys-91, Cys-144, and Cys-147. The Nucleophile role is filled by Cys-167.

Belongs to the MsrB Met sulfoxide reductase family. The cofactor is Zn(2+).

The protein resides in the mitochondrion. The enzyme catalyses L-methionyl-[protein] + [thioredoxin]-disulfide + H2O = L-methionyl-(R)-S-oxide-[protein] + [thioredoxin]-dithiol. The catalysed reaction is [thioredoxin]-disulfide + L-methionine + H2O = L-methionine (R)-S-oxide + [thioredoxin]-dithiol. Methionine-sulfoxide reductase that specifically reduces methionine (R)-sulfoxide back to methionine. While in many cases, methionine oxidation is the result of random oxidation following oxidative stress, methionine oxidation is also a post-translational modification that takes place on specific residue. Upon oxidative stress, may play a role in the preservation of mitochondrial integrity by decreasing the intracellular reactive oxygen species build-up through its scavenging role, hence contributing to cell survival and protein maintenance. The protein is Methionine-R-sulfoxide reductase B2, mitochondrial (msrb2) of Danio rerio (Zebrafish).